Here is a 351-residue protein sequence, read N- to C-terminus: AA9 family lytic polysaccharide monooxygenase A (351 aa).

His1 is a Cu(2+) binding site. A disulfide bridge connects residues Cys52 and Cys178. Residue Asn53 is glycosylated (N-linked (GlcNAc...) asparagine). Cu(2+) is bound at residue His86. N-linked (GlcNAc...) asparagine glycosylation occurs at Asn138. O2 is bound by residues His164 and Gln173. Tyr175 contributes to the Cu(2+) binding site. Ser280 carries the GPI-anchor amidated serine lipid modification. The propeptide at 281–351 (SAIGTSTASS…RSGTLGRLSF (71 aa)) is removed in mature form.

This sequence belongs to the polysaccharide monooxygenase AA9 family. Requires Cu(2+) as cofactor.

The protein localises to the cell membrane. The enzyme catalyses [(1-&gt;4)-beta-D-glucosyl]n+m + reduced acceptor + O2 = 4-dehydro-beta-D-glucosyl-[(1-&gt;4)-beta-D-glucosyl]n-1 + [(1-&gt;4)-beta-D-glucosyl]m + acceptor + H2O.. In terms of biological role, lytic polysaccharide monooxygenase (LPMO) that depolymerizes crystalline and amorphous polysaccharides via the oxidation of scissile alpha- or beta-(1-4)-glycosidic bonds, yielding C1 or C4 oxidation products. Catalysis by LPMOs requires the reduction of the active-site copper from Cu(II) to Cu(I) by a reducing agent and H(2)O(2) or O(2) as a cosubstrate. Has broad specificity, cleaving at any position along the beta-glucan backbone of xyloglucan, regardless of substitutions. Shows minor activity on glucomannan. The polypeptide is AA9 family lytic polysaccharide monooxygenase A (Gloeophyllum trabeum (Brown rot fungus)).